Here is a 207-residue protein sequence, read N- to C-terminus: N-(5'-phosphoribosyl)anthranilate isomerase (207 aa).

It belongs to the TrpF family.

It catalyses the reaction N-(5-phospho-beta-D-ribosyl)anthranilate = 1-(2-carboxyphenylamino)-1-deoxy-D-ribulose 5-phosphate. It participates in amino-acid biosynthesis; L-tryptophan biosynthesis; L-tryptophan from chorismate: step 3/5. The polypeptide is N-(5'-phosphoribosyl)anthranilate isomerase (Geotalea daltonii (strain DSM 22248 / JCM 15807 / FRC-32) (Geobacter daltonii)).